The chain runs to 342 residues: Cellular tumor antigen p53 (342 aa).

The transcription activation (acidic) stretch occupies residues Met-1–Glu-35. The DNA-binding element occupies Asn-68–Ser-255. Positions 142, 145, 201, and 205 each coordinate Zn(2+). The segment at Arg-236–Arg-243 is interaction with DNA. Over residues Asp-244–Gly-256 the composition is skewed to basic and acidic residues. The tract at residues Asp-244–Asp-287 is disordered. Residues Lys-261–Lys-278 carry the Bipartite nuclear localization signal motif. Residues Thr-271–Ser-282 are compositionally biased toward low complexity. The interval Lys-288 to Thr-317 is oligomerization. A Nuclear export signal motif is present at residues Leu-302–Leu-313. The segment at Gly-318 to Asp-342 is disordered. The segment at Pro-319–Lys-336 is basic (repression of DNA-binding).

This sequence belongs to the p53 family. In terms of assembly, binds DNA as a homotetramer. Requires Zn(2+) as cofactor.

It localises to the cytoplasm. The protein resides in the nucleus. In terms of biological role, multifunctional transcription factor that induces cell cycle arrest, DNA repair or apoptosis upon binding to its target DNA sequence. Acts as a tumor suppressor in many tumor types; induces growth arrest or apoptosis depending on the physiological circumstances and cell type. Negatively regulates cell division by controlling expression of a set of genes required for this process. One of the activated genes is an inhibitor of cyclin-dependent kinases. Apoptosis induction seems to be mediated either by stimulation of BAX and FAS antigen expression, or by repression of Bcl-2 expression. The protein is Cellular tumor antigen p53 (tp53) of Xiphophorus maculatus (Southern platyfish).